Consider the following 134-residue polypeptide: Profilin-3 (134 aa).

Cys13 and Cys118 are oxidised to a cystine. The Involved in PIP2 interaction signature appears at 84 to 100; the sequence is AVIRGKKGSGGITIKKT. Phosphothreonine is present on Thr114.

It belongs to the profilin family. As to quaternary structure, occurs in many kinds of cells as a complex with monomeric actin in a 1:1 ratio. Phosphorylated by MAP kinases.

The protein localises to the cytoplasm. The protein resides in the cytoskeleton. In terms of biological role, binds to actin and affects the structure of the cytoskeleton. At high concentrations, profilin prevents the polymerization of actin, whereas it enhances it at low concentrations. This chain is Profilin-3, found in Olea europaea (Common olive).